Reading from the N-terminus, the 340-residue chain is Holliday junction branch migration complex subunit RuvB (340 aa).

A large ATPase domain (RuvB-L) region spans residues 1 to 183 (MKRDDLVSPE…FGISFRLDYY (183 aa)). ATP contacts are provided by residues L22, R23, G64, K67, T68, T69, 130–132 (EDF), R173, Y183, and R220. Mg(2+) is bound at residue T68. Residues 184-254 (AVEELTKIIN…VAVHALEMLE (71 aa)) form a small ATPAse domain (RuvB-S) region. Positions 257 to 340 (DRGFDQMDRS…KFEVGQKELF (84 aa)) are head domain (RuvB-H). DNA contacts are provided by K312 and R317.

The protein belongs to the RuvB family. In terms of assembly, homohexamer. Forms an RuvA(8)-RuvB(12)-Holliday junction (HJ) complex. HJ DNA is sandwiched between 2 RuvA tetramers; dsDNA enters through RuvA and exits via RuvB. An RuvB hexamer assembles on each DNA strand where it exits the tetramer. Each RuvB hexamer is contacted by two RuvA subunits (via domain III) on 2 adjacent RuvB subunits; this complex drives branch migration. In the full resolvosome a probable DNA-RuvA(4)-RuvB(12)-RuvC(2) complex forms which resolves the HJ.

The protein localises to the cytoplasm. It carries out the reaction ATP + H2O = ADP + phosphate + H(+). The RuvA-RuvB-RuvC complex processes Holliday junction (HJ) DNA during genetic recombination and DNA repair, while the RuvA-RuvB complex plays an important role in the rescue of blocked DNA replication forks via replication fork reversal (RFR). RuvA specifically binds to HJ cruciform DNA, conferring on it an open structure. The RuvB hexamer acts as an ATP-dependent pump, pulling dsDNA into and through the RuvAB complex. RuvB forms 2 homohexamers on either side of HJ DNA bound by 1 or 2 RuvA tetramers; 4 subunits per hexamer contact DNA at a time. Coordinated motions by a converter formed by DNA-disengaged RuvB subunits stimulates ATP hydrolysis and nucleotide exchange. Immobilization of the converter enables RuvB to convert the ATP-contained energy into a lever motion, pulling 2 nucleotides of DNA out of the RuvA tetramer per ATP hydrolyzed, thus driving DNA branch migration. The RuvB motors rotate together with the DNA substrate, which together with the progressing nucleotide cycle form the mechanistic basis for DNA recombination by continuous HJ branch migration. Branch migration allows RuvC to scan DNA until it finds its consensus sequence, where it cleaves and resolves cruciform DNA. This Syntrophus aciditrophicus (strain SB) protein is Holliday junction branch migration complex subunit RuvB.